A 269-amino-acid polypeptide reads, in one-letter code: Cbp/p300-interacting transactivator 2 (269 aa).

Residues 142–200 (AGHQMNGTNQHFRDCNPKHSGGSSTPGGAGGSGTPGGSGGTSGGAGGSSAGGSGGGSTM) are disordered. The span at 165-198 (STPGGAGGSGTPGGSGGTSGGAGGSSAGGSGGGS) shows a compositional bias: gly residues.

The protein belongs to the CITED family. In terms of assembly, interacts (via C-terminus) with EP300 (via CH1 domain); the interaction is stimulated in response to hypoxia. Interacts with PPARA. Interacts (via C-terminus) with TFAP2A, TFAP2B and TFAP2C. Interacts (via C-terminus) with SMAD2. Interacts (via C-terminus) with SMAD3 (via MH2 domain). Interacts with LHX2 (via LIM domains). Interacts with WT1 isoform 1 and isoform 3. In terms of tissue distribution, ubiquitous.

The protein localises to the nucleus. Its function is as follows. Transcriptional coactivator of the p300/CBP-mediated transcription complex. Acts as a bridge, linking TFAP2 transcription factors and the p300/CBP transcriptional coactivator complex in order to stimulate TFAP2-mediated transcriptional activation. Positively regulates TGF-beta signaling through its association with the SMAD/p300/CBP-mediated transcriptional coactivator complex. Stimulates the peroxisome proliferator-activated receptors PPARA transcriptional activity. Enhances estrogen-dependent transactivation mediated by estrogen receptors. Also acts as a transcriptional corepressor; interferes with the binding of the transcription factors HIF1A or STAT2 and the p300/CBP transcriptional coactivator complex. Participates in sex determination and early gonad development by stimulating transcription activation of SRY. Plays a role in controlling left-right patterning during embryogenesis; potentiates transcriptional activation of NODAL-mediated gene transcription in the left lateral plate mesoderm (LPM). Plays an essential role in differentiation of the adrenal cortex from the adrenogonadal primordium (AGP); stimulates WT1-mediated transcription activation thereby up-regulating the nuclear hormone receptor NR5A1 promoter activity. Associates with chromatin to the PITX2 P1 promoter region. This chain is Cbp/p300-interacting transactivator 2 (Cited2), found in Mus musculus (Mouse).